The following is a 546-amino-acid chain: Chaperonin GroEL (546 aa).

ATP contacts are provided by residues 30–33, lysine 51, 87–91, glycine 415, 479–481, and aspartate 495; these read TLGP, DGTTT, and NAA.

The protein belongs to the chaperonin (HSP60) family. In terms of assembly, forms a cylinder of 14 subunits composed of two heptameric rings stacked back-to-back. Interacts with the co-chaperonin GroES.

Its subcellular location is the cytoplasm. It catalyses the reaction ATP + H2O + a folded polypeptide = ADP + phosphate + an unfolded polypeptide.. In terms of biological role, together with its co-chaperonin GroES, plays an essential role in assisting protein folding. The GroEL-GroES system forms a nano-cage that allows encapsulation of the non-native substrate proteins and provides a physical environment optimized to promote and accelerate protein folding. This Bordetella avium (strain 197N) protein is Chaperonin GroEL.